A 1375-amino-acid chain; its full sequence is Patatin-like phospholipase domain-containing protein 6 (1375 aa).

The segment at 1-20 (MEAPLQTGMMGTSSHGLATN) is disordered. Residues 1 to 59 (MEAPLQTGMMGTSSHGLATNSSGAKVAERDGFQDVLAPGEGSAGRICGAQPVPFVPQVL) lie on the Lumenal side of the membrane. Residues 9-20 (MMGTSSHGLATN) are compositionally biased toward polar residues. Asn20 carries N-linked (GlcNAc...) asparagine glycosylation. The chain crosses the membrane as a helical span at residues 60-80 (GVMIGAGVAVVVTAVLILLVV). The Cytoplasmic portion of the chain corresponds to 81 to 1375 (RRLRVPKTPA…QEPPGSATDA (1295 aa)). An a nucleoside 3',5'-cyclic phosphate-binding site is contributed by 195 to 322 (VLGHFEKPLF…VRVVQIIMVR (128 aa)). 2 disordered regions span residues 352–436 (FPSP…RSDF) and 449–472 (LQEE…PREQ). Ser354 carries the phosphoserine modification. The span at 359-376 (TRTSPVRGSKRMVSTSAT) shows a compositional bias: polar residues. Residue Thr361 is modified to Phosphothreonine. 2 positions are modified to phosphoserine: Ser362 and Ser372. Over residues 384–398 (GRPPDPTGAPLPGPT) the composition is skewed to pro residues. The residue at position 420 (Ser420) is a Phosphoserine. Phosphothreonine is present on Thr464. A nucleoside 3',5'-cyclic phosphate contacts are provided by residues 511–633 (ELAK…VAAR) and 629–749 (TVAA…LSQK). A PNPLA domain is found at 981 to 1147 (LVLGGGGARG…INNLPADIAR (167 aa)). The GXGXXG motif lies at 985–990 (GGGARG). A GXSXG motif is present at residues 1012–1016 (GTSIG). The Nucleophile role is filled by Ser1014. Asp1134 functions as the Proton acceptor in the catalytic mechanism. A DGA/G motif is present at residues 1134–1136 (DGG). A disordered region spans residues 1306-1375 (SYVSDGCADG…QEPPGSATDA (70 aa)). Residues 1313-1329 (ADGEESDCLTEYEEDAG) are compositionally biased toward acidic residues.

This sequence belongs to the NTE family. Post-translationally, glycosylated. In terms of tissue distribution, expressed in brain, placenta, kidney, neuron and skeletal muscle. Expressed in the developing eye, pituitary and brain.

It localises to the endoplasmic reticulum membrane. The catalysed reaction is a 1-acyl-sn-glycero-3-phosphocholine + H2O = sn-glycerol 3-phosphocholine + a fatty acid + H(+). It catalyses the reaction 1-(9Z-octadecenoyl)-sn-glycero-3-phosphocholine + H2O = sn-glycerol 3-phosphocholine + (9Z)-octadecenoate + H(+). It carries out the reaction 1-hexadecanoylglycerol + H2O = glycerol + hexadecanoate + H(+). The enzyme catalyses 2-hexadecanoylglycerol + H2O = glycerol + hexadecanoate + H(+). The catalysed reaction is 1-(9Z-octadecenoyl)-glycerol + H2O = glycerol + (9Z)-octadecenoate + H(+). It catalyses the reaction 2-(9Z-octadecenoyl)-glycerol + H2O = glycerol + (9Z)-octadecenoate + H(+). It carries out the reaction 2-(5Z,8Z,11Z,14Z-eicosatetraenoyl)-glycerol + H2O = glycerol + (5Z,8Z,11Z,14Z)-eicosatetraenoate + H(+). The enzyme catalyses 1-hexadecanoyl-sn-glycero-3-phosphate + H2O = sn-glycerol 3-phosphate + hexadecanoate + H(+). The catalysed reaction is 1-hexadecanoyl-sn-glycero-3-phosphocholine + H2O = sn-glycerol 3-phosphocholine + hexadecanoate + H(+). Inhibited by a series a OPs such as mipafox (MPX), phenyl saligenin phosphate (PSP), phenyl dipentyl phosphinate (PDPP), diisopropyl fluorophosphate and paraoxon. Functionally, phospholipase B that deacylates intracellular phosphatidylcholine (PtdCho), generating glycerophosphocholine (GroPtdCho). This deacylation occurs at both sn-2 and sn-1 positions of PtdCho. Catalyzes the hydrolysis of several naturally occurring membrane-associated lipids. Hydrolyzes lysophospholipids and monoacylglycerols, preferring the 1-acyl to the 2-acyl isomer. Does not catalyze hydrolysis of di- or triacylglycerols or fatty acid amides. The sequence is that of Patatin-like phospholipase domain-containing protein 6 from Homo sapiens (Human).